A 380-amino-acid chain; its full sequence is Chorismate synthase (380 aa).

Positions 40 and 46 each coordinate NADP(+). Residues 128–130 (RSS), 247–248 (QA), Gly-292, 307–311 (KPIPT), and Arg-333 each bind FMN.

Belongs to the chorismate synthase family. In terms of assembly, homotetramer. The cofactor is FMNH2.

The catalysed reaction is 5-O-(1-carboxyvinyl)-3-phosphoshikimate = chorismate + phosphate. The protein operates within metabolic intermediate biosynthesis; chorismate biosynthesis; chorismate from D-erythrose 4-phosphate and phosphoenolpyruvate: step 7/7. In terms of biological role, catalyzes the anti-1,4-elimination of the C-3 phosphate and the C-6 proR hydrogen from 5-enolpyruvylshikimate-3-phosphate (EPSP) to yield chorismate, which is the branch point compound that serves as the starting substrate for the three terminal pathways of aromatic amino acid biosynthesis. This reaction introduces a second double bond into the aromatic ring system. This chain is Chorismate synthase, found in Alkaliphilus metalliredigens (strain QYMF).